A 211-amino-acid polypeptide reads, in one-letter code: ATP phosphoribosyltransferase (211 aa).

Belongs to the ATP phosphoribosyltransferase family. Short subfamily. Heteromultimer composed of HisG and HisZ subunits.

Its subcellular location is the cytoplasm. It catalyses the reaction 1-(5-phospho-beta-D-ribosyl)-ATP + diphosphate = 5-phospho-alpha-D-ribose 1-diphosphate + ATP. Its pathway is amino-acid biosynthesis; L-histidine biosynthesis; L-histidine from 5-phospho-alpha-D-ribose 1-diphosphate: step 1/9. In terms of biological role, catalyzes the condensation of ATP and 5-phosphoribose 1-diphosphate to form N'-(5'-phosphoribosyl)-ATP (PR-ATP). Has a crucial role in the pathway because the rate of histidine biosynthesis seems to be controlled primarily by regulation of HisG enzymatic activity. This is ATP phosphoribosyltransferase from Lacticaseibacillus casei (strain BL23) (Lactobacillus casei).